The chain runs to 610 residues: Elongation factor 4 (610 aa).

The region spanning 15–197 (KSIRNFSIIA…RIINDIPYPK (183 aa)) is the tr-type G domain. GTP is bound by residues 27 to 32 (DHGKST) and 144 to 147 (NKID).

This sequence belongs to the TRAFAC class translation factor GTPase superfamily. Classic translation factor GTPase family. LepA subfamily.

It localises to the cell membrane. The enzyme catalyses GTP + H2O = GDP + phosphate + H(+). Required for accurate and efficient protein synthesis under certain stress conditions. May act as a fidelity factor of the translation reaction, by catalyzing a one-codon backward translocation of tRNAs on improperly translocated ribosomes. Back-translocation proceeds from a post-translocation (POST) complex to a pre-translocation (PRE) complex, thus giving elongation factor G a second chance to translocate the tRNAs correctly. Binds to ribosomes in a GTP-dependent manner. The sequence is that of Elongation factor 4 from Buchnera aphidicola subsp. Acyrthosiphon pisum (strain 5A).